The primary structure comprises 84 residues: Hepcidin (84 aa).

An N-terminal signal peptide occupies residues 1-24 (MALSSQIWAACLLLLLLLASLTSG). Residues 25-54 (SVFPQQTGQLAELQPQDRAGARASWMPMFQ) constitute a propeptide that is removed on maturation. Disulfide bonds link C66-C82, C69-C72, C70-C78, and C73-C81.

It belongs to the hepcidin family. As to quaternary structure, interacts with SLC40A1; this interaction promotes SLC40A1 rapid ubiquitination. Highest expression in liver and to a lesser extent in heart and brain. Low levels in lung, tonsils, salivary gland, trachea, prostate gland, adrenal gland and thyroid gland. Secreted into the urine and blood. Expressed by hepatocytes.

The protein resides in the secreted. In terms of biological role, liver-produced hormone that constitutes the main circulating regulator of iron absorption and distribution across tissues. Acts by promoting endocytosis and degradation of ferroportin/SLC40A1, leading to the retention of iron in iron-exporting cells and decreased flow of iron into plasma. Controls the major flows of iron into plasma: absorption of dietary iron in the intestine, recycling of iron by macrophages, which phagocytose old erythrocytes and other cells, and mobilization of stored iron from hepatocytes. Functionally, has strong antimicrobial activity against E.coli ML35P N.cinerea and weaker against S.epidermidis, S.aureus and group b streptococcus bacteria. Active against the fungus C.albicans. No activity against P.aeruginosa. The sequence is that of Hepcidin from Homo sapiens (Human).